Consider the following 143-residue polypeptide: Large ribosomal subunit protein uL15 (143 aa).

The segment at 1-52 is disordered; that stretch reads MELNSIQPADGAKHYKRRVGRGIGSGLGKTSGRGHKGQKSRSGGFHKVGFEG. The span at 21-31 shows a compositional bias: gly residues; the sequence is RGIGSGLGKTS.

It belongs to the universal ribosomal protein uL15 family. As to quaternary structure, part of the 50S ribosomal subunit.

Its function is as follows. Binds to the 23S rRNA. The chain is Large ribosomal subunit protein uL15 from Janthinobacterium sp. (strain Marseille) (Minibacterium massiliensis).